The chain runs to 89 residues: Small ribosomal subunit protein uS15 (89 aa).

This sequence belongs to the universal ribosomal protein uS15 family. In terms of assembly, part of the 30S ribosomal subunit. Forms a bridge to the 50S subunit in the 70S ribosome, contacting the 23S rRNA.

Functionally, one of the primary rRNA binding proteins, it binds directly to 16S rRNA where it helps nucleate assembly of the platform of the 30S subunit by binding and bridging several RNA helices of the 16S rRNA. Its function is as follows. Forms an intersubunit bridge (bridge B4) with the 23S rRNA of the 50S subunit in the ribosome. The sequence is that of Small ribosomal subunit protein uS15 from Pasteurella multocida (strain Pm70).